We begin with the raw amino-acid sequence, 427 residues long: Homogentisate 1,2-dioxygenase (427 aa).

Histidine 285 (proton acceptor) is an active-site residue. Fe cation-binding residues include histidine 328 and glutamate 334. Residues tyrosine 343 and histidine 364 each contribute to the homogentisate site. Position 364 (histidine 364) interacts with Fe cation.

Belongs to the homogentisate dioxygenase family. Hexamer; dimer of trimers. Fe cation is required as a cofactor.

It catalyses the reaction homogentisate + O2 = 4-maleylacetoacetate + H(+). The protein operates within amino-acid degradation; L-phenylalanine degradation; acetoacetate and fumarate from L-phenylalanine: step 4/6. Involved in the catabolism of homogentisate (2,5-dihydroxyphenylacetate or 2,5-OH-PhAc), a central intermediate in the degradation of phenylalanine and tyrosine. Catalyzes the oxidative ring cleavage of the aromatic ring of homogentisate to yield maleylacetoacetate. The chain is Homogentisate 1,2-dioxygenase from Caulobacter sp. (strain K31).